A 425-amino-acid polypeptide reads, in one-letter code: Adenylosuccinate synthetase (425 aa).

Residues 12-18 (GDEGKAK) and 40-42 (GHT) each bind GTP. Catalysis depends on aspartate 13, which acts as the Proton acceptor. Positions 13 and 40 each coordinate Mg(2+). IMP contacts are provided by residues 13–16 (DEGK), 38–41 (NAGH), threonine 130, arginine 144, glutamine 224, threonine 239, and arginine 303. Histidine 41 acts as the Proton donor in catalysis. 299-305 (ATTGRPR) contacts substrate. Residues arginine 305, 331–333 (KID), and 411–413 (STG) contribute to the GTP site.

Belongs to the adenylosuccinate synthetase family. As to quaternary structure, homodimer. The cofactor is Mg(2+).

The protein resides in the cytoplasm. The catalysed reaction is IMP + L-aspartate + GTP = N(6)-(1,2-dicarboxyethyl)-AMP + GDP + phosphate + 2 H(+). The protein operates within purine metabolism; AMP biosynthesis via de novo pathway; AMP from IMP: step 1/2. Its function is as follows. Plays an important role in the de novo pathway of purine nucleotide biosynthesis. Catalyzes the first committed step in the biosynthesis of AMP from IMP. This chain is Adenylosuccinate synthetase, found in Leptospira interrogans serogroup Icterohaemorrhagiae serovar copenhageni (strain Fiocruz L1-130).